Consider the following 249-residue polypeptide: Basic leucine zipper 23 (249 aa).

The interval 66–90 is disordered; it reads KVSTDDTSESSGKKRPLGNREAVRK. In terms of domain architecture, bZIP spans 74–121; that stretch reads ESSGKKRPLGNREAVRKYREKKKAKAASLEDEVMRLKAVNNQLLKRLQ. The basic motif stretch occupies residues 78 to 98; the sequence is KKRPLGNREAVRKYREKKKAK. The leucine-zipper stretch occupies residues 102–116; that stretch reads LEDEVMRLKAVNNQL.

The protein localises to the nucleus. Transcription factor involved in the response to zinc ion deficiency. Binds to the consensus sequence 5'-[AG]TGTCGACA[CT]-3' also called zinc deficiency response element (ZDRE). The ZDRE sequence is conserved in the plant kingdom and present in the promoters of genes that constitute the primary response to zinc deficiency, comprising additional ZIP metal transporter genes. Required for zinc accumulation in roots. Mediates the expression of the zinc transporter ZIP12 during growth in zinc-deficient conditions. ZIP12 transporter is involved in zinc uptake in roots. The chain is Basic leucine zipper 23 from Arabidopsis thaliana (Mouse-ear cress).